We begin with the raw amino-acid sequence, 81 residues long: ATP synthase subunit c, chloroplastic (81 aa).

2 helical membrane passes run 3 to 23 and 57 to 77; these read PIIS…ASIG and LAFM…LLFA.

The protein belongs to the ATPase C chain family. F-type ATPases have 2 components, F(1) - the catalytic core - and F(0) - the membrane proton channel. F(1) has five subunits: alpha(3), beta(3), gamma(1), delta(1), epsilon(1). F(0) has four main subunits: a(1), b(1), b'(1) and c(10-14). The alpha and beta chains form an alternating ring which encloses part of the gamma chain. F(1) is attached to F(0) by a central stalk formed by the gamma and epsilon chains, while a peripheral stalk is formed by the delta, b and b' chains.

It localises to the plastid. It is found in the chloroplast thylakoid membrane. Its function is as follows. F(1)F(0) ATP synthase produces ATP from ADP in the presence of a proton or sodium gradient. F-type ATPases consist of two structural domains, F(1) containing the extramembraneous catalytic core and F(0) containing the membrane proton channel, linked together by a central stalk and a peripheral stalk. During catalysis, ATP synthesis in the catalytic domain of F(1) is coupled via a rotary mechanism of the central stalk subunits to proton translocation. Key component of the F(0) channel; it plays a direct role in translocation across the membrane. A homomeric c-ring of between 10-14 subunits forms the central stalk rotor element with the F(1) delta and epsilon subunits. The protein is ATP synthase subunit c, chloroplastic of Phaseolus vulgaris (Kidney bean).